A 355-amino-acid chain; its full sequence is 3-dehydroquinate synthase (355 aa).

NAD(+) is bound by residues 71-76 (EGEASK), 105-109 (GVVGD), 129-130 (TS), Lys-142, and Lys-151. The Zn(2+) site is built by Glu-184, His-246, and His-263.

It belongs to the sugar phosphate cyclases superfamily. Dehydroquinate synthase family. It depends on Co(2+) as a cofactor. Zn(2+) is required as a cofactor. NAD(+) serves as cofactor.

It localises to the cytoplasm. It catalyses the reaction 7-phospho-2-dehydro-3-deoxy-D-arabino-heptonate = 3-dehydroquinate + phosphate. The protein operates within metabolic intermediate biosynthesis; chorismate biosynthesis; chorismate from D-erythrose 4-phosphate and phosphoenolpyruvate: step 2/7. Its function is as follows. Catalyzes the conversion of 3-deoxy-D-arabino-heptulosonate 7-phosphate (DAHP) to dehydroquinate (DHQ). In Streptococcus thermophilus (strain ATCC BAA-491 / LMD-9), this protein is 3-dehydroquinate synthase.